Reading from the N-terminus, the 107-residue chain is Essential MCU regulator, mitochondrial (107 aa).

A mitochondrion-targeting transit peptide spans 1–47 (MASGAARWLALVRVGSGASRSWLSLRKGGDVSAGRSCSGQSLVPTRS). The Mitochondrial matrix segment spans residues 48–65 (VIVTRSGAILPKPVKMSF). A helical membrane pass occupies residues 66-85 (GLLRVFSIVIPFLYVGTLIS). The GXXXX[G/A/S] signature appears at 81 to 85 (GTLIS). The Mitochondrial intermembrane portion of the chain corresponds to 86-107 (KNFAALLEEHDIFVPEDDDDDD).

Belongs to the SMDT1/EMRE family. As to quaternary structure, component of the uniplex complex, composed of MCU, EMRE/SMDT1, MICU1 and MICU2 (or MICU3) in a 4:4:1:1 stoichiometry. The number of EMRE/SMDT1 molecules is hovewer variable, ranging from 1 to 4 copies per uniplex complex, leading to uniplex complexes with distinct gatekeeping profiles. Interacts (via its C-terminal poly-Asp tail) with MCUR1; the interaction is direct. Unprocessed form interacts (via transit peptide) with MAIP1. In terms of processing, undergoes proteolytic degradation in neurons: degraded by AFG3L2 and SPG7 before SMDT1/EMRE assembly with the uniporter complex, limiting the availability of SMDT1/EMRE for MCU assembly and promoting efficient assembly of gatekeeper subunits with MCU.

The protein resides in the mitochondrion inner membrane. Essential regulatory subunit of the mitochondrial calcium uniporter complex (uniplex), a complex that mediates calcium uptake into mitochondria. Required to bridge the calcium-sensing proteins MICU1 with the calcium-conducting subunit MCU. Acts by mediating activation of MCU and retention of MICU1 to the MCU pore, in order to ensure tight regulation of the uniplex complex and appropriate responses to intracellular calcium signaling. The sequence is that of Essential MCU regulator, mitochondrial from Bos taurus (Bovine).